Here is a 396-residue protein sequence, read N- to C-terminus: Elongation factor Tu (396 aa).

In terms of domain architecture, tr-type G spans 10-206; that stretch reads KPHVNIGTIG…AVDEYIPTPQ (197 aa). Residues 19 to 26 are G1; the sequence is GHVDHGKT. GTP is bound at residue 19–26; that stretch reads GHVDHGKT. T26 serves as a coordination point for Mg(2+). The segment at 60-64 is G2; sequence GITIS. The G3 stretch occupies residues 81-84; it reads DCPG. Residues 81-85 and 136-139 each bind GTP; these read DCPGH and NKVD. The segment at 136–139 is G4; the sequence is NKVD. The tract at residues 174-176 is G5; that stretch reads SAL.

This sequence belongs to the TRAFAC class translation factor GTPase superfamily. Classic translation factor GTPase family. EF-Tu/EF-1A subfamily. As to quaternary structure, monomer.

The protein resides in the cytoplasm. The catalysed reaction is GTP + H2O = GDP + phosphate + H(+). GTP hydrolase that promotes the GTP-dependent binding of aminoacyl-tRNA to the A-site of ribosomes during protein biosynthesis. This chain is Elongation factor Tu, found in Stigmatella aurantiaca.